The primary structure comprises 70 residues: DNA gyrase inhibitor YacG (70 aa).

The Zn(2+) site is built by Cys-20, Cys-23, Cys-35, and Cys-39.

It belongs to the DNA gyrase inhibitor YacG family. As to quaternary structure, interacts with GyrB. It depends on Zn(2+) as a cofactor.

In terms of biological role, inhibits all the catalytic activities of DNA gyrase by preventing its interaction with DNA. Acts by binding directly to the C-terminal domain of GyrB, which probably disrupts DNA binding by the gyrase. The protein is DNA gyrase inhibitor YacG of Rhizobium etli (strain ATCC 51251 / DSM 11541 / JCM 21823 / NBRC 15573 / CFN 42).